The primary structure comprises 450 residues: MFSFNLLTQYIIMRSLKKFFVKTYGCQMNELDSEIMIGQLENRGLTRSHDENDADLLIFNTCSIRDLAERKVMGKLGKLGLTKQSQAIIGVTGCMANAKKDSLFQKLPHIDFVLGTNNIHDLNHVLDEVLASGKQSIRTDDHFEFELDYLNAKREDQIKAYVSIIRGCDKFCTYCVVPYTRGSEVSRAPENILEECRHLVNQGYKEITLLGQNVNSYGKDKLEWKCLFHDLLYQLDKIPGLERVRFMTSHPVDISKELMEAIRDLKTLCEFVHFPLQAGSNRVLKKMHRIYTVEQYLEKVQMLKEIVPNVALGTDIIVGFPTETEEEFQETYRLLKEIEYSVAFLFSYSPRKGTPAMRWRDDVPEEVKQDRLQRLLQLQDTIYMKHRQAFLGQTVEVLVERRNFKDDRLVKGRTRCWKNVLFTGGDELVGTMQQVKIHGYSHQTLLGDLQ.

The MTTase N-terminal domain occupies 17 to 131 (KKFFVKTYGC…LNHVLDEVLA (115 aa)). Positions 26, 62, 94, 168, 172, and 175 each coordinate [4Fe-4S] cluster. One can recognise a Radical SAM core domain in the interval 154–385 (REDQIKAYVS…LQLQDTIYMK (232 aa)). The region spanning 388-450 (QAFLGQTVEV…SHQTLLGDLQ (63 aa)) is the TRAM domain.

The protein belongs to the methylthiotransferase family. MiaB subfamily. In terms of assembly, monomer. The cofactor is [4Fe-4S] cluster.

It is found in the cytoplasm. It catalyses the reaction N(6)-dimethylallyladenosine(37) in tRNA + (sulfur carrier)-SH + AH2 + 2 S-adenosyl-L-methionine = 2-methylsulfanyl-N(6)-dimethylallyladenosine(37) in tRNA + (sulfur carrier)-H + 5'-deoxyadenosine + L-methionine + A + S-adenosyl-L-homocysteine + 2 H(+). Functionally, catalyzes the methylthiolation of N6-(dimethylallyl)adenosine (i(6)A), leading to the formation of 2-methylthio-N6-(dimethylallyl)adenosine (ms(2)i(6)A) at position 37 in tRNAs that read codons beginning with uridine. The sequence is that of tRNA-2-methylthio-N(6)-dimethylallyladenosine synthase from Protochlamydia amoebophila (strain UWE25).